The sequence spans 86 residues: Triosephosphate isomerase (86 aa).

E62 functions as the Proton acceptor in the catalytic mechanism.

The protein belongs to the triosephosphate isomerase family. As to quaternary structure, homodimer.

The catalysed reaction is D-glyceraldehyde 3-phosphate = dihydroxyacetone phosphate. The protein operates within carbohydrate biosynthesis; gluconeogenesis. Its pathway is carbohydrate degradation; glycolysis; D-glyceraldehyde 3-phosphate from glycerone phosphate: step 1/1. This chain is Triosephosphate isomerase, found in Platanus orientalis (Oriental plane-tree).